The chain runs to 693 residues: ATP-dependent DNA helicase RecG (693 aa).

The interval 48 to 146 is wedge domain; it reads THLYPIGELL…GDLSTPELQE (99 aa). The region spanning 283–448 is the Helicase ATP-binding domain; it reads DMALDVPMMR…AYADLDTSVI (166 aa). 296–303 contacts ATP; sequence GDVGSGKT. The DEAH box motif lies at 397-400; it reads DEQH. In terms of domain architecture, Helicase C-terminal spans 482 to 628; the sequence is EGRQAYWVCT…GFVIAQKDLE (147 aa).

It belongs to the helicase family. RecG subfamily. Monomer in solution. Probably a monomer on HJ DNA. Binding to fork DNA is facilitated by SSB; the proteins do not seem to stably associate. Mg(2+) serves as cofactor.

It carries out the reaction Couples ATP hydrolysis with the unwinding of duplex DNA by translocating in the 3'-5' direction.. The catalysed reaction is ATP + H2O = ADP + phosphate + H(+). Plays a critical role in recombination and DNA repair. Helps process Holliday junction (HJ) intermediates to mature products by catalyzing branch migration. Has replication fork regression activity, unwinds stalled or blocked replication forks to make a HJ that can be resolved by RuvC or RusA. Also rewinds unwound dsDNA in an ATP-dependent manner. Has double-stranded (ds)DNA unwinding activity characteristic of a DNA helicase with 3'-5' polarity in vitro on linear dsDNA; branched duplex DNA (Y-DNA) substrates adopt different conformations that influence which of the two arms are unwound. Binds and unwinds HJ and Y-DNA but not linear duplex DNA; binds no more than 10 nucleotides of ssDNA at a fork. Has a role in constitutive stable DNA replication (cSDR, DNA replication in the absence of protein synthesis) and R-loop (RNA annealed with dsDNA) formation. Unwinds R-loops but not RNA:DNA hybrids. Is genetically synergistic to RadA and RuvABC. The protein is ATP-dependent DNA helicase RecG of Escherichia coli (strain K12).